The chain runs to 233 residues: MLTRKQYELLRFINERLKESGVPPSFDEMKDALDLRSKSGIHRLITALEERGFIRRLPNRARAIEVIKLPEVAGNGGGRRGFTPSVIEGNLGKVRPSGGGVVDDAERPVAVPVMGRIAAGTPIEALQTRSHTISVPPDMLGSGEHYALEVRGDSMVEAGILDGDMALIQRNETAETGDIVVALIDDEEATLKRFRRRGASIALEPANTAYEVRILPPNRVQIQGKLIGIYRKY.

The H-T-H motif DNA-binding region spans 26–46 (FDEMKDALDLRSKSGIHRLIT). Residues Ser154 and Lys192 each act as for autocatalytic cleavage activity in the active site.

The protein belongs to the peptidase S24 family. Homodimer.

The enzyme catalyses Hydrolysis of Ala-|-Gly bond in repressor LexA.. Functionally, represses a number of genes involved in the response to DNA damage (SOS response), including recA and lexA. In the presence of single-stranded DNA, RecA interacts with LexA causing an autocatalytic cleavage which disrupts the DNA-binding part of LexA, leading to derepression of the SOS regulon and eventually DNA repair. The chain is LexA repressor from Nitrobacter hamburgensis (strain DSM 10229 / NCIMB 13809 / X14).